A 210-amino-acid chain; its full sequence is MSKKDSSRRWMREHINDKFVKNAKKAGYRSRAVYKLIEVINKEKFIKPGNKVIDLGAAPGSWSQMAIKAVGKSGQVIANDILNIKPIDGIDFLQGDFTENSVYEALLNLTMNQKVNVVLSDIAPNISGQPSVDIPKSMYLCELALDIAIKSLTPSGYFFVKVFQGDGFDMFVESCRTYFSYVTIHKPKASRTRSKEVYLLANKLKPAKLM.

S-adenosyl-L-methionine is bound by residues G60, W62, D80, D96, and D121. Residue K161 is the Proton acceptor of the active site.

Belongs to the class I-like SAM-binding methyltransferase superfamily. RNA methyltransferase RlmE family.

It is found in the cytoplasm. It carries out the reaction uridine(2552) in 23S rRNA + S-adenosyl-L-methionine = 2'-O-methyluridine(2552) in 23S rRNA + S-adenosyl-L-homocysteine + H(+). Functionally, specifically methylates the uridine in position 2552 of 23S rRNA at the 2'-O position of the ribose in the fully assembled 50S ribosomal subunit. This chain is Ribosomal RNA large subunit methyltransferase E, found in Vesicomyosocius okutanii subsp. Calyptogena okutanii (strain HA).